Here is a 42-residue protein sequence, read N- to C-terminus: uncharacterized protein (42 aa).

The tract at residues 1 to 42 is disordered; it reads MTTGKPQSFEKMRTPFPGRSKAKGPQSDIIPSAPPNTPVTEH. Over residues 32 to 42 the composition is skewed to pro residues; sequence SAPPNTPVTEH.

This is an uncharacterized protein from Schizosaccharomyces pombe (strain 972 / ATCC 24843) (Fission yeast).